A 353-amino-acid polypeptide reads, in one-letter code: Phosphate acyltransferase (353 aa).

The protein belongs to the PlsX family. As to quaternary structure, homodimer. Probably interacts with PlsY.

The protein localises to the cytoplasm. It carries out the reaction a fatty acyl-[ACP] + phosphate = an acyl phosphate + holo-[ACP]. It functions in the pathway lipid metabolism; phospholipid metabolism. Its function is as follows. Catalyzes the reversible formation of acyl-phosphate (acyl-PO(4)) from acyl-[acyl-carrier-protein] (acyl-ACP). This enzyme utilizes acyl-ACP as fatty acyl donor, but not acyl-CoA. The chain is Phosphate acyltransferase from Rhodopseudomonas palustris (strain BisB5).